Here is a 257-residue protein sequence, read N- to C-terminus: MFKVRVIPCLDVKDGRVVKGVNFVGLRDAGDPVEAAIAYGAAGADELCFLDITATHENRGTILDVVKRTAEACFMPVTVGGGVRTVDDIRTLLNHGADKVSINSAAVSRREFVKEAAEKFGNQCIVVAIDAKRVARSGSDRWEIFTHGGRKETGIDAIEYAQEVVALGAGEILLTSMDRDGTKQGFDIPLTRAIADSITVPVIASGGVGNLDHLVAGIREGHATAVLAASIFHFGEFTVRQAKEHMARAGLPMRLDP.

Catalysis depends on residues aspartate 11 and aspartate 130.

The protein belongs to the HisA/HisF family. In terms of assembly, heterodimer of HisH and HisF.

It localises to the cytoplasm. It catalyses the reaction 5-[(5-phospho-1-deoxy-D-ribulos-1-ylimino)methylamino]-1-(5-phospho-beta-D-ribosyl)imidazole-4-carboxamide + L-glutamine = D-erythro-1-(imidazol-4-yl)glycerol 3-phosphate + 5-amino-1-(5-phospho-beta-D-ribosyl)imidazole-4-carboxamide + L-glutamate + H(+). The protein operates within amino-acid biosynthesis; L-histidine biosynthesis; L-histidine from 5-phospho-alpha-D-ribose 1-diphosphate: step 5/9. Its function is as follows. IGPS catalyzes the conversion of PRFAR and glutamine to IGP, AICAR and glutamate. The HisF subunit catalyzes the cyclization activity that produces IGP and AICAR from PRFAR using the ammonia provided by the HisH subunit. In Afipia carboxidovorans (strain ATCC 49405 / DSM 1227 / KCTC 32145 / OM5) (Oligotropha carboxidovorans), this protein is Imidazole glycerol phosphate synthase subunit HisF.